The chain runs to 208 residues: High frequency lysogenization protein HflD homolog (208 aa).

Belongs to the HflD family.

The protein localises to the cytoplasm. It localises to the cell inner membrane. The chain is High frequency lysogenization protein HflD homolog from Pseudomonas entomophila (strain L48).